The chain runs to 196 residues: Imidazoleglycerol-phosphate dehydratase (196 aa).

The protein belongs to the imidazoleglycerol-phosphate dehydratase family.

Its subcellular location is the cytoplasm. The catalysed reaction is D-erythro-1-(imidazol-4-yl)glycerol 3-phosphate = 3-(imidazol-4-yl)-2-oxopropyl phosphate + H2O. The protein operates within amino-acid biosynthesis; L-histidine biosynthesis; L-histidine from 5-phospho-alpha-D-ribose 1-diphosphate: step 6/9. The polypeptide is Imidazoleglycerol-phosphate dehydratase (Clostridium botulinum (strain Kyoto / Type A2)).